The following is a 115-amino-acid chain: Large ribosomal subunit protein bL19 (115 aa).

The protein belongs to the bacterial ribosomal protein bL19 family.

In terms of biological role, this protein is located at the 30S-50S ribosomal subunit interface and may play a role in the structure and function of the aminoacyl-tRNA binding site. The chain is Large ribosomal subunit protein bL19 from Wigglesworthia glossinidia brevipalpis.